The following is a 354-amino-acid chain: Holliday junction branch migration complex subunit RuvB (354 aa).

Positions 4–191 are large ATPase domain (RuvB-L); the sequence is TDKLAAPARV…FGIVARLEFY (188 aa). ATP contacts are provided by residues leucine 30, arginine 31, glycine 72, lysine 75, threonine 76, threonine 77, 138 to 140, arginine 181, tyrosine 191, and arginine 228; that span reads EDY. Residue threonine 76 participates in Mg(2+) binding. A small ATPAse domain (RuvB-S) region spans residues 192 to 262; the sequence is TAEELARIVT…MADAALAMLD (71 aa). The head domain (RuvB-H) stretch occupies residues 265 to 354; that stretch reads RVGFDLMDRK…GDAGELFGDA (90 aa). Residues arginine 301, arginine 320, and arginine 325 each coordinate DNA.

This sequence belongs to the RuvB family. In terms of assembly, homohexamer. Forms an RuvA(8)-RuvB(12)-Holliday junction (HJ) complex. HJ DNA is sandwiched between 2 RuvA tetramers; dsDNA enters through RuvA and exits via RuvB. An RuvB hexamer assembles on each DNA strand where it exits the tetramer. Each RuvB hexamer is contacted by two RuvA subunits (via domain III) on 2 adjacent RuvB subunits; this complex drives branch migration. In the full resolvosome a probable DNA-RuvA(4)-RuvB(12)-RuvC(2) complex forms which resolves the HJ.

Its subcellular location is the cytoplasm. It catalyses the reaction ATP + H2O = ADP + phosphate + H(+). Functionally, the RuvA-RuvB-RuvC complex processes Holliday junction (HJ) DNA during genetic recombination and DNA repair, while the RuvA-RuvB complex plays an important role in the rescue of blocked DNA replication forks via replication fork reversal (RFR). RuvA specifically binds to HJ cruciform DNA, conferring on it an open structure. The RuvB hexamer acts as an ATP-dependent pump, pulling dsDNA into and through the RuvAB complex. RuvB forms 2 homohexamers on either side of HJ DNA bound by 1 or 2 RuvA tetramers; 4 subunits per hexamer contact DNA at a time. Coordinated motions by a converter formed by DNA-disengaged RuvB subunits stimulates ATP hydrolysis and nucleotide exchange. Immobilization of the converter enables RuvB to convert the ATP-contained energy into a lever motion, pulling 2 nucleotides of DNA out of the RuvA tetramer per ATP hydrolyzed, thus driving DNA branch migration. The RuvB motors rotate together with the DNA substrate, which together with the progressing nucleotide cycle form the mechanistic basis for DNA recombination by continuous HJ branch migration. Branch migration allows RuvC to scan DNA until it finds its consensus sequence, where it cleaves and resolves cruciform DNA. The protein is Holliday junction branch migration complex subunit RuvB of Cupriavidus taiwanensis (strain DSM 17343 / BCRC 17206 / CCUG 44338 / CIP 107171 / LMG 19424 / R1) (Ralstonia taiwanensis (strain LMG 19424)).